The chain runs to 222 residues: MAGQISPTRSALLASKASLKTATSGADLLKRKRDALIGEFFALVKDALAAREQLAGVSKGAYTSLFGAKAWDSPEAVESLSLAGTSDYAVDMQIESIYGVKVPRIKIPERQAAAAFSPINVGARTIQAATDFGTVLEAIVRVAATETKLRRIGEEIKKTSRRVNALEQVVIPGIRDDIRFIRGVLDQREREESFRLKKIKAKLEREKNKENAQAGQHGSAAD.

The protein belongs to the V-ATPase D subunit family.

Functionally, produces ATP from ADP in the presence of a proton gradient across the membrane. This chain is V-type ATP synthase subunit D, found in Deinococcus geothermalis (strain DSM 11300 / CIP 105573 / AG-3a).